A 417-amino-acid chain; its full sequence is Hydrogen cyanide synthase subunit HcnC (417 aa).

Positions 1 to 18 are cleaved as a signal peptide; sequence MIKHYDVVIAGGGVIGAS. 7 to 21 lines the FAD pocket; that stretch reads VVIAGGGVIGASCAY. Residue C19 is the site of N-palmitoyl cysteine attachment. A lipid anchor (S-diacylglycerol cysteine) is attached at C19. Residues 46 to 66 traverse the membrane as a helical segment; the sequence is SAGGLWAIGESVGLGCGVIFF.

It belongs to the FAD-dependent glycerol-3-phosphate dehydrogenase family. As to quaternary structure, heterotrimer of HcnA, HcnB and HcnC.

The protein resides in the cell membrane. The enzyme catalyses glycine + 2 A = hydrogen cyanide + 2 AH2 + CO2. In terms of biological role, a three-component membrane-bound flavoenzyme that catalyzes the formation of hydrogen cyanide, a secondary metabolite, by transfer of electrons to a cyanide-resistant branch of the aerobic respiratory chain. Contributes to suppression of black root rot of tobacco. The protein is Hydrogen cyanide synthase subunit HcnC of Pseudomonas protegens (strain DSM 19095 / LMG 27888 / CFBP 6595 / CHA0).